A 146-amino-acid polypeptide reads, in one-letter code: MASEAMELNGGVNRRDDPGARPQQGRMSRNTPLNMNHYANKKSAAESMLDIALLMANASQLKTVLELGPSFSFYIPLITLISISLTLQIIVGILLIFIVKWNLNDSSKHYILNLLENIVTALVFIVVVVNVFITAFGVQRPDDKTS.

Positions 1-33 are disordered; the sequence is MASEAMELNGGVNRRDDPGARPQQGRMSRNTPL. Residues 1–75 lie on the Extracellular side of the membrane; that stretch reads MASEAMELNG…ELGPSFSFYI (75 aa). A required to induce plasma membrane rupture region spans residues 37 to 66; it reads HYANKKSAAESMLDIALLMANASQLKTVLE. A helix alpha1 region spans residues 41 to 52; it reads KKSAAESMLDIA. Positions 55 to 71 are helix alpha2; sequence MANASQLKTVLELGPSF. Asn57 is a glycosylation site (N-linked (GlcNAc...) asparagine). Residues 76-100 form a helical membrane-spanning segment; it reads PLITLISISLTLQIIVGILLIFIVK. Residues 101–110 are Cytoplasmic-facing; that stretch reads WNLNDSSKHY. The helical transmembrane segment at 111–135 threads the bilayer; the sequence is ILNLLENIVTALVFIVVVVNVFITA. Residues 136–146 lie on the Extracellular side of the membrane; it reads FGVQRPDDKTS.

The protein belongs to the ninjurin family. In terms of assembly, homooligomer; in response to death stimuli, homooligomerizes into long, highly branched filaments and large, ring-shaped structures in the membrane. Homodimer; in absence of death stimuli, forms an inactive homodimer. Homooligomer; in response to death stimuli, homooligomerizes into long, highly branched filaments and large, ring-shaped structures in the membrane.

It localises to the cell membrane. It is found in the synaptic cell membrane. With respect to regulation, in normal conditions, NINJ1 is inactivated. In response to death stimuli, homooligomerizes and disrupts membrane integrity by introducing the hydrophilic faces of alpha1 and alpha2 helices into the hydrophobic membrane. Homooligomerization and ability to mediate plasma membrane rupture is inhibited by glycine; it is unclear whether glycine directly or indirectly inhibits homooligomerization. In response to death stimuli, homooligomerizes and disrupts membrane integrity by introducing the hydrophilic faces of alpha1 and alpha2 helices into the hydrophobic membrane. Homooligomerization and ability to mediate plasma membrane rupture is inhibited by glycine; it is unclear whether glycine directly or indirectly inhibits homooligomerization. In normal conditions, NINJ1 is autoinhibited via formation of a homodimer: in the inactive homodimer, the alpha1 and alpha2 helices (residues 41-71) form a single transmembrane region without a kink, in which hydrophilic faces of alpha1 and alpha2 helices are sequestered. Effector of various programmed cell death, such as pyroptosis and necroptosis, which mediates plasma membrane rupture (cytolysis). Oligomerizes in response to death stimuli and forms ring-like structures on the plasma membrane: acts by cutting and shedding membrane disks, like a cookie cutter, leading to membrane damage and loss that cannot be repaired by the cell. Plasma membrane rupture leads to release intracellular molecules named damage-associated molecular patterns (DAMPs) that propagate the inflammatory response. Mechanistically, mediates plasma membrane rupture by introducing hydrophilic faces of 2 alpha helices into the hydrophobic membrane. Induces plasma membrane rupture downstream of Gasdermin (GSDMA, GSDMB, GSDMC, GSDMD, or GSDME) or MLKL during pyroptosis or necroptosis, respectively. Also acts as an effector of PANoptosis and ferroptosis. Induces plasma membrane rupture in response to cell swelling caused by osmotic stress. Acts as a regulator of Toll-like receptor 4 (TLR4) signaling triggered by lipopolysaccharide (LPS) during systemic inflammation; directly binds LPS. Involved in leukocyte migration during inflammation by promoting transendothelial migration of macrophages via homotypic binding. Promotes the migration of monocytes across the brain endothelium to central nervous system inflammatory lesions. Also acts as a homophilic transmembrane adhesion molecule involved in various processes such as axonal growth, cell chemotaxis and angiogenesis. Promotes cell adhesion by mediating homophilic interactions via its extracellular N-terminal adhesion motif (N-NAM). Also involved in striated muscle growth and differentiation. The polypeptide is Ninjurin-1 (Danio rerio (Zebrafish)).